The sequence spans 429 residues: Glutamate-1-semialdehyde 2,1-aminomutase 1 (429 aa).

Residue lysine 268 is modified to N6-(pyridoxal phosphate)lysine.

It belongs to the class-III pyridoxal-phosphate-dependent aminotransferase family. HemL subfamily. Homodimer. Pyridoxal 5'-phosphate serves as cofactor.

Its subcellular location is the cytoplasm. The catalysed reaction is (S)-4-amino-5-oxopentanoate = 5-aminolevulinate. The protein operates within porphyrin-containing compound metabolism; protoporphyrin-IX biosynthesis; 5-aminolevulinate from L-glutamyl-tRNA(Glu): step 2/2. The sequence is that of Glutamate-1-semialdehyde 2,1-aminomutase 1 from Listeria innocua serovar 6a (strain ATCC BAA-680 / CLIP 11262).